The sequence spans 540 residues: 2-isopropylmalate synthase (540 aa).

Positions 8–269 (VLIFDTTLRD…YFNPFFGRAE (262 aa)) constitute a Pyruvate carboxyltransferase domain. 4 residues coordinate Mn(2+): Asp17, His208, His210, and Asn244. Residues 408–540 (QLKLVQVSCG…ATPLDASPTL (133 aa)) form a regulatory domain region.

It belongs to the alpha-IPM synthase/homocitrate synthase family. LeuA type 1 subfamily. Homodimer. Requires Mn(2+) as cofactor.

It is found in the cytoplasm. It carries out the reaction 3-methyl-2-oxobutanoate + acetyl-CoA + H2O = (2S)-2-isopropylmalate + CoA + H(+). Its pathway is amino-acid biosynthesis; L-leucine biosynthesis; L-leucine from 3-methyl-2-oxobutanoate: step 1/4. In terms of biological role, catalyzes the condensation of the acetyl group of acetyl-CoA with 3-methyl-2-oxobutanoate (2-ketoisovalerate) to form 3-carboxy-3-hydroxy-4-methylpentanoate (2-isopropylmalate). The sequence is that of 2-isopropylmalate synthase from Synechococcus sp. (strain WH7803).